The sequence spans 156 residues: Lipoprotein signal peptidase (156 aa).

The next 4 helical transmembrane spans lie at 8–28, 39–59, 67–87, and 99–119; these read IYINIIFFIITVDFYSKKWIL, VFFILNLFHVHNFGAAFSILS, YFLLIFSIIIILAIIKIMIKF, and SLILAGAIGNLIDRINYGFVI. Catalysis depends on residues D120 and D138. The helical transmembrane segment at 129–149 threads the bilayer; sequence WHFATFNIADFSIFIGMIMII.

Belongs to the peptidase A8 family.

It localises to the cell inner membrane. It catalyses the reaction Release of signal peptides from bacterial membrane prolipoproteins. Hydrolyzes -Xaa-Yaa-Zaa-|-(S,diacylglyceryl)Cys-, in which Xaa is hydrophobic (preferably Leu), and Yaa (Ala or Ser) and Zaa (Gly or Ala) have small, neutral side chains.. Its pathway is protein modification; lipoprotein biosynthesis (signal peptide cleavage). This protein specifically catalyzes the removal of signal peptides from prolipoproteins. In Buchnera aphidicola subsp. Schizaphis graminum (strain Sg), this protein is Lipoprotein signal peptidase.